Reading from the N-terminus, the 272-residue chain is Hydroxyethylthiazole kinase (272 aa).

Met-46 lines the substrate pocket. Residues Arg-122 and Thr-168 each contribute to the ATP site. Gly-195 provides a ligand contact to substrate.

It belongs to the Thz kinase family. It depends on Mg(2+) as a cofactor.

The catalysed reaction is 5-(2-hydroxyethyl)-4-methylthiazole + ATP = 4-methyl-5-(2-phosphooxyethyl)-thiazole + ADP + H(+). The protein operates within cofactor biosynthesis; thiamine diphosphate biosynthesis; 4-methyl-5-(2-phosphoethyl)-thiazole from 5-(2-hydroxyethyl)-4-methylthiazole: step 1/1. Its function is as follows. Catalyzes the phosphorylation of the hydroxyl group of 4-methyl-5-beta-hydroxyethylthiazole (THZ). This chain is Hydroxyethylthiazole kinase, found in Alkaliphilus metalliredigens (strain QYMF).